Here is a 295-residue protein sequence, read N- to C-terminus: Ribosomal protein L11 methyltransferase (295 aa).

Residues Thr145, Gly166, Asp188, and Asn230 each coordinate S-adenosyl-L-methionine.

The protein belongs to the methyltransferase superfamily. PrmA family.

It localises to the cytoplasm. It carries out the reaction L-lysyl-[protein] + 3 S-adenosyl-L-methionine = N(6),N(6),N(6)-trimethyl-L-lysyl-[protein] + 3 S-adenosyl-L-homocysteine + 3 H(+). Methylates ribosomal protein L11. This Pectobacterium carotovorum subsp. carotovorum (strain PC1) protein is Ribosomal protein L11 methyltransferase.